A 484-amino-acid chain; its full sequence is NADH-quinone oxidoreductase subunit N (484 aa).

Helical transmembrane passes span 11 to 31, 42 to 62, 79 to 98, 113 to 133, 134 to 154, 167 to 187, 211 to 231, 248 to 268, 279 to 299, 313 to 333, 335 to 355, 378 to 398, 408 to 428, and 457 to 477; these read SLWI…VLLI, VTYY…FNLI, MASV…MVYS, FVLV…YSLL, TLYL…AIAR, FVLG…IYGI, LIIN…LGAV, VTLF…VRIL, WSDL…VVAL, ISHV…GYGA, AFYM…IILL, FALM…LVGF, VVSA…VISA, and LVLS…DFWM.

It belongs to the complex I subunit 2 family. In terms of assembly, NDH-1 is composed of 14 different subunits. Subunits NuoA, H, J, K, L, M, N constitute the membrane sector of the complex.

Its subcellular location is the cell inner membrane. The enzyme catalyses a quinone + NADH + 5 H(+)(in) = a quinol + NAD(+) + 4 H(+)(out). NDH-1 shuttles electrons from NADH, via FMN and iron-sulfur (Fe-S) centers, to quinones in the respiratory chain. The immediate electron acceptor for the enzyme in this species is believed to be ubiquinone. Couples the redox reaction to proton translocation (for every two electrons transferred, four hydrogen ions are translocated across the cytoplasmic membrane), and thus conserves the redox energy in a proton gradient. In Ruthia magnifica subsp. Calyptogena magnifica, this protein is NADH-quinone oxidoreductase subunit N.